Consider the following 208-residue polypeptide: Ectodysplasin-A receptor-associated adapter protein (208 aa).

Residues 1–18 (MASPDDPLRSDHMAKEPV) show a composition bias toward basic and acidic residues. Positions 1 to 99 (MASPDDPLRS…KGSCSCPSCS (99 aa)) are disordered. A compositionally biased stretch (polar residues) spans 49 to 61 (TVNSNCPPNSDDQ). Positions 116–195 (DTIRIKLDPC…KILRRWVDEE (80 aa)) constitute a Death domain.

Binds EDAR. Self-associates and binds TRAF1, TRAF2 and TRAF3.

It localises to the cytoplasm. Its function is as follows. Adapter protein that interacts with EDAR DEATH domain and couples the receptor to EDA signaling pathway during morphogenesis of ectodermal organs. Mediates the activation of NF-kappa-B. This is Ectodysplasin-A receptor-associated adapter protein (Edaradd) from Mus musculus (Mouse).